Reading from the N-terminus, the 747-residue chain is Polyribonucleotide nucleotidyltransferase (747 aa).

2 residues coordinate Mg(2+): Asp-487 and Asp-493. A KH domain is found at 554–613 (PSTTTIKIDKDKIRDVIGPGGKVIKEICETSDAKIDISDDGTVSVYASDRDKLKVALDKI). One can recognise an S1 motif domain in the interval 623–691 (GEIFNGTVMK…NKGKAKLTIK (69 aa)). The disordered stretch occupies residues 691–747 (KNADKDKSSNNPKQKNNVNNSKENSEPERRDSSKKRAWNEDNNSDTTEVITERKYFN). A compositionally biased stretch (low complexity) spans 699-712 (SNNPKQKNNVNNSK). Polar residues predominate over residues 730–739 (EDNNSDTTEV).

It belongs to the polyribonucleotide nucleotidyltransferase family. It depends on Mg(2+) as a cofactor.

Its subcellular location is the cytoplasm. The enzyme catalyses RNA(n+1) + phosphate = RNA(n) + a ribonucleoside 5'-diphosphate. Its function is as follows. Involved in mRNA degradation. Catalyzes the phosphorolysis of single-stranded polyribonucleotides processively in the 3'- to 5'-direction. The polypeptide is Polyribonucleotide nucleotidyltransferase (Rickettsia akari (strain Hartford)).